Reading from the N-terminus, the 502-residue chain is Arabinose import ATP-binding protein AraG (502 aa).

ABC transporter domains follow at residues 6 to 241 (LEFD…MVGR) and 252 to 497 (REVG…MVES). 38 to 45 (GENGAGKS) serves as a coordination point for ATP.

Belongs to the ABC transporter superfamily. Arabinose importer (TC 3.A.1.2.2) family. The complex is composed of two ATP-binding proteins (AraG), two transmembrane proteins (AraH) and a solute-binding protein (AraF).

The protein resides in the cell inner membrane. It carries out the reaction L-arabinose(out) + ATP + H2O = L-arabinose(in) + ADP + phosphate + H(+). In terms of biological role, part of the ABC transporter complex AraFGH involved in arabinose import. Responsible for energy coupling to the transport system. The sequence is that of Arabinose import ATP-binding protein AraG from Mannheimia succiniciproducens (strain KCTC 0769BP / MBEL55E).